A 584-amino-acid polypeptide reads, in one-letter code: MLSLTMLLLERVGLIIILAYVLMNIPYFKNLMNRRRTWKARWQLCIIFSLFALMSNLTGIVIDHQHSLSGSVYFRLDDDVSLANTRVLTIGVAGLVGGPFVGLFVGVISGIFRVYMGGADAQVYLISSIFIGIIAGYFGLQAQRRKRYPSIAKSAMIGIVMEMIQMLSILTFSHDKAYAVDLISLIALPMIIVNSVGTAIFMSIIISTLKQEEQMKAVQTHDVLQLMNQTLPYFKEGLNRESAQQIAMIIKNLMKVSAVAITSKNEILSHVGAGSDHHIPTNEILTSLSKDVLKSGKLKEVHTKEEIGCSHPNCPLRAAIVIPLEMHGSIVGTLKMYFTNPNDLTFVERQLAEGLANIFSSQIELGEAETQSKLLKDAEIKSLQAQVSPHFFFNSINTISALVRINSEKARELLLELSYFFRANLQGSKQHTITLDKELSQVRAYLSLEQARYPGRFNININVEDKYRNVLVPPFLIQILVENAIKHAFTNRKQGNDIDVSVIKETATHVRIIVQDNGQGISKDKMHLLGETSVESESGTGSALENLNLRLKGLFGKSAALQFESTSSGTTFWCVLPYERQEEE.

6 helical membrane passes run 6 to 28 (MLLL…IPYF), 40 to 62 (ARWQ…GIVI), 88 to 110 (LTIG…VISG), 123 to 140 (VYLI…YFGL), 155 to 172 (AMIG…ILTF), and 184 to 206 (SLIA…SIII). The GAF domain maps to 311–362 (HPNCPLRAAIVIPLEMHGSIVGTLKMYFTNPNDLTFVERQLAEGLANIFSSQ). Positions 363–580 (IELGEAETQS…TFWCVLPYER (218 aa)) constitute a Histidine kinase domain. A Phosphohistidine; by autocatalysis modification is found at His-390.

In terms of processing, autophosphorylated on His-390.

It localises to the cell membrane. The enzyme catalyses ATP + protein L-histidine = ADP + protein N-phospho-L-histidine.. In terms of biological role, member of the two-component regulatory system LytR/LytS that regulates genes involved in autolysis, programmed cell death, biofilm formation and cell wall metabolism. Also participates in sensing and responding to host defense cationic antimicrobial peptides (HDPs). Functions as a sensor protein kinase which is autophosphorylated at a histidine residue and transfers its phosphate group to the conserved aspartic acid residue in the regulatory domain of LytR. In turn, LytR binds to the upstream promoter regions of target genes including lrgA and lrgB, to positively regulate their expression. Also possesses a phosphatase activity that dephosphorylates and thus inactivates LytR. This is Sensor histidine kinase/phosphatase LytS (lytS) from Staphylococcus aureus (strain MRSA252).